The chain runs to 244 residues: Chalcone--flavanone isomerase (244 aa).

The substrate site is built by Thr45, Asn110, and Ser187.

The protein belongs to the chalcone isomerase family.

The catalysed reaction is a chalcone = a flavanone.. The protein operates within secondary metabolite biosynthesis; flavonoid biosynthesis. In terms of biological role, catalyzes the intramolecular cyclization of bicyclic chalcones into tricyclic (S)-flavanones. Responsible for the isomerization of 4,2',4',6'-tetrahydroxychalcone (also termed chalcone) into naringenin. This chain is Chalcone--flavanone isomerase (CHI), found in Nicotiana tabacum (Common tobacco).